Reading from the N-terminus, the 469-residue chain is Probable monogalactosyldiacylglycerol synthase 2, chloroplastic (469 aa).

A chloroplast-targeting transit peptide spans 1-42 (MVISVATPRRSIRDAVLGGVLGAGGRQLYQPLRCAFYDGAAG).

The protein belongs to the glycosyltransferase 28 family.

It localises to the plastid. It is found in the chloroplast membrane. The enzyme catalyses a 1,2-diacyl-sn-glycerol + UDP-alpha-D-galactose = a 1,2-diacyl-3-O-(beta-D-galactosyl)-sn-glycerol + UDP + H(+). In terms of biological role, involved in the synthesis of the major structural component of photosynthetic membranes. This Oryza sativa subsp. japonica (Rice) protein is Probable monogalactosyldiacylglycerol synthase 2, chloroplastic (MGD2).